The sequence spans 196 residues: Adenylate kinase (196 aa).

ATP is bound at residue 9-17 (GIPGVGKST).

It belongs to the archaeal adenylate kinase family.

It localises to the cytoplasm. The catalysed reaction is AMP + ATP = 2 ADP. This is Adenylate kinase from Thermococcus kodakarensis (strain ATCC BAA-918 / JCM 12380 / KOD1) (Pyrococcus kodakaraensis (strain KOD1)).